Reading from the N-terminus, the 556-residue chain is Adenine deaminase (556 aa).

It belongs to the metallo-dependent hydrolases superfamily. Adenine deaminase family. The cofactor is Mn(2+).

It catalyses the reaction adenine + H2O + H(+) = hypoxanthine + NH4(+). In Archaeoglobus fulgidus (strain ATCC 49558 / DSM 4304 / JCM 9628 / NBRC 100126 / VC-16), this protein is Adenine deaminase.